The sequence spans 118 residues: MTQEKGKFAEQLALNYLKENGLALVMQNYHCRLGEIDLIMREGSYLVFVEVRSRSNMNFGGGLASITYEKKQKIIKATSHYMIKYRIQDKFPIRFDVISIDGKSNKITWLKNAFDAGC.

The protein belongs to the UPF0102 family.

This is UPF0102 protein lpg2994 from Legionella pneumophila subsp. pneumophila (strain Philadelphia 1 / ATCC 33152 / DSM 7513).